Here is a 302-residue protein sequence, read N- to C-terminus: Nodulation protein D 3 (302 aa).

The HTH lysR-type domain maps to 6 to 63 (LDLNLLVALDALMIERNLTAAARSINLSQPAMSAAVRRLRSYFRDELFTMRGREFVPT). Positions 23 to 42 (LTAAARSINLSQPAMSAAVR) form a DNA-binding region, H-T-H motif.

The protein belongs to the LysR transcriptional regulatory family.

Its function is as follows. NodD regulates the expression of the nodABCFE genes which encode other nodulation proteins. NodD is also a negative regulator of its own expression. Binds flavonoids as inducers. The polypeptide is Nodulation protein D 3 (nodD3) (Rhizobium leguminosarum bv. phaseoli).